Consider the following 269-residue polypeptide: Putative phosphatase M6_Spy0533 (269 aa).

Aspartate 9 acts as the Nucleophile in catalysis. Aspartate 9 lines the Mg(2+) pocket. Isoleucine 10 provides a ligand contact to phosphate. Residue aspartate 11 participates in Mg(2+) binding. Residues 43 to 44 and lysine 196 each bind phosphate; that span reads TG. Mg(2+) is bound at residue aspartate 219. Asparagine 222 is a phosphate binding site.

It depends on Mg(2+) as a cofactor.

This is Putative phosphatase M6_Spy0533 from Streptococcus pyogenes serotype M6 (strain ATCC BAA-946 / MGAS10394).